The sequence spans 2684 residues: Teneurin-1 (2684 aa).

3 disordered regions span residues 1-37 (MFQH…HDYT), 127-156 (TTSS…PTYS), and 170-204 (GTNQ…KKFD). The Cytoplasmic portion of the chain corresponds to 1-216 (MFQHRTTNAQ…SDTCSRWPSK (216 aa)). Over residues 11–24 (GPPPNRPMPRPPAG) the composition is skewed to pro residues. Residues 127 to 136 (TTSSTLSPAS) show a composition bias toward low complexity. A helical membrane pass occupies residues 217–237 (WNILLAAALLVALFVICILLF). Residues 238–2684 (RAPNYVYTQP…VHSWKFRKSE (2447 aa)) are Extracellular-facing. 2 consecutive EGF-like domains span residues 463–499 (TGRT…KECE) and 501–534 (RHNW…EACE). 6 disulfide bridges follow: cysteine 467-cysteine 476, cysteine 472-cysteine 487, cysteine 489-cysteine 498, cysteine 505-cysteine 516, cysteine 510-cysteine 522, and cysteine 524-cysteine 533. The segment at 576-614 (PQAQSPPRRGQEPTESSKTRKAQVKPTPTSEKKKESREL) is disordered. 2 stretches are compositionally biased toward basic and acidic residues: residues 584–593 (RGQEPTESSK) and 605–614 (SEKKKESREL). EGF-like domains lie at 650-684 (DSVD…SNCT) and 716-753 (AIDG…VDCS). 6 cysteine pairs are disulfide-bonded: cysteine 654-cysteine 666, cysteine 659-cysteine 672, cysteine 674-cysteine 683, cysteine 720-cysteine 730, cysteine 724-cysteine 741, and cysteine 743-cysteine 752. 4 NHL repeats span residues 1276–1317 (DSCG…IDTT), 1334–1378 (RTCA…VVHD), 1398–1441 (SASA…VRKL), and 1470–1513 (AVSL…VSAR).

Belongs to the tenascin family. Teneurin subfamily. Post-translationally, probably proteolytically processed to generate a N-terminal intracellular domain. Isoform 1 is mainly expressed in organs derived from the mesoderm, including the pharynx, vulva muscles, gonad distal tip cells, intestine and several tail neurons. Isoform 2 is mainly expressed in the organs derived from the ectoderm, including hypodermal cells, head ganglion neurons and tail neurons (at protein level).

The protein resides in the nucleus. Its subcellular location is the cell membrane. It is found in the membrane. In terms of biological role, plays a role in the gonadal basement membrane maintenance and/or adhesion early in development. Contributes to the guidance of pharyngeal neurons. This chain is Teneurin-1 (ten-1), found in Caenorhabditis elegans.